A 444-amino-acid polypeptide reads, in one-letter code: GTPase Der (444 aa).

EngA-type G domains follow at residues 2–167 (LKVA…LKEI) and 173–349 (FKFC…ENLN). GTP is bound by residues 8–15 (GKPNVGKS), 55–59 (DTGGL), 118–121 (NKSE), 179–186 (GRPNVGKS), 226–230 (DTAGI), and 291–294 (NKWD). Residues 350 to 434 (LKFNSKILTD…PITLYFKNKT (85 aa)) enclose the KH-like domain.

This sequence belongs to the TRAFAC class TrmE-Era-EngA-EngB-Septin-like GTPase superfamily. EngA (Der) GTPase family. In terms of assembly, associates with the 50S ribosomal subunit.

Functionally, GTPase that plays an essential role in the late steps of ribosome biogenesis. The chain is GTPase Der from Malacoplasma penetrans (strain HF-2) (Mycoplasma penetrans).